Consider the following 792-residue polypeptide: Homeobox protein HAZ1 (792 aa).

A disordered region spans residues 1–154; the sequence is MDKTTTSDLV…RPPKGGTPKD (154 aa). Residues 15–36 show a composition bias toward polar residues; it reads NIGSNAGSAQEPLTTNGKTSGV. A compositionally biased stretch (basic residues) spans 38–49; that stretch reads NRYKQTVKRGRK. Positions 51–67 are enriched in polar residues; sequence SQISPSKTYPLRSSHSN. The segment covering 95–104 has biased composition (basic residues); it reads VAKKRKRSKP. Residues 116-127 show a composition bias toward basic and acidic residues; sequence TSEKKNKAHNEL. Residues 244–301 form a PHD-type zinc finger; it reads DIFCAACGSKDVTLKNDIILCDGICDRGFHQYCLNPPLLAEDIPQGDEGWLCPACDCK. Disordered stretches follow at residues 338–495 and 529–599; these read QIDA…NSNL and YGKA…SDQQ. Acidic residues predominate over residues 345–354; it reads PSDDSADNDY. The span at 362–371 shows a compositional bias: basic and acidic residues; it reads HKVDEEKSSG. 2 stretches are compositionally biased toward acidic residues: residues 373 to 389 and 433 to 453; these read DGGEGLDSDDSSSEDSE and DESNSDQSDESDFTSDSDDFC. The homeobox DNA-binding region spans 610–669; the sequence is STAKNRHFGPAINQKLKAHFKEDPYPSRATKENLAQELGLTFNQVTKWFSSTRHYARVAA. Disordered stretches follow at residues 677-697 and 711-792; these read ENHTAENNNNTNTVDSIQLRG and SEER…KTGR. Composition is skewed to polar residues over residues 716–737 and 746–760; these read GQSNLNEGTPLRSDTSCGQSVA and NQGNDSSSNVRTPNA. Basic and acidic residues predominate over residues 774–792; sequence DEARRKAVQRELRKMKTGR.

It belongs to the PHD-associated homeobox family. In terms of tissue distribution, expressed in roots, leaves, stems, panicle and seeds.

It localises to the nucleus. Functionally, transcriptional repressor involved in the regulation of gibberrelin (GA) signaling. Binds to the 5'-GATC-3' motif of HD16/EL1 promoter. Functions as a positive regulator of GA signaling by suppressing the expression of HD16/EL1, a negative regulator of GA signaling. The polypeptide is Homeobox protein HAZ1 (Oryza sativa subsp. japonica (Rice)).